The chain runs to 482 residues: Glutamate--tRNA ligase (482 aa).

The 'HIGH' region motif lies at 9-19; it reads PSPTGPLHIGG. The 'KMSKS' region signature appears at 250 to 254; it reads KMSKR. Lys253 is a binding site for ATP.

It belongs to the class-I aminoacyl-tRNA synthetase family. Glutamate--tRNA ligase type 1 subfamily. In terms of assembly, monomer.

The protein localises to the cytoplasm. It carries out the reaction tRNA(Glu) + L-glutamate + ATP = L-glutamyl-tRNA(Glu) + AMP + diphosphate. Functionally, catalyzes the attachment of glutamate to tRNA(Glu) in a two-step reaction: glutamate is first activated by ATP to form Glu-AMP and then transferred to the acceptor end of tRNA(Glu). This Desulforamulus reducens (strain ATCC BAA-1160 / DSM 100696 / MI-1) (Desulfotomaculum reducens) protein is Glutamate--tRNA ligase.